The chain runs to 104 residues: uncharacterized protein (104 aa).

Residues 81-97 (CLLMLPCISVVMSISSV) form a helical membrane-spanning segment.

It is found in the cell membrane. This is an uncharacterized protein from Bacillus subtilis (strain 168).